We begin with the raw amino-acid sequence, 392 residues long: Succinyl-diaminopimelate desuccinylase (392 aa).

His-78 provides a ligand contact to Zn(2+). Asp-80 is a catalytic residue. Residue Asp-110 coordinates Zn(2+). Glu-145 (proton acceptor) is an active-site residue. The Zn(2+) site is built by Glu-146, Glu-174, and His-363.

This sequence belongs to the peptidase M20A family. DapE subfamily. As to quaternary structure, homodimer. Requires Zn(2+) as cofactor. The cofactor is Co(2+).

The enzyme catalyses N-succinyl-(2S,6S)-2,6-diaminopimelate + H2O = (2S,6S)-2,6-diaminopimelate + succinate. Its pathway is amino-acid biosynthesis; L-lysine biosynthesis via DAP pathway; LL-2,6-diaminopimelate from (S)-tetrahydrodipicolinate (succinylase route): step 3/3. In terms of biological role, catalyzes the hydrolysis of N-succinyl-L,L-diaminopimelic acid (SDAP), forming succinate and LL-2,6-diaminopimelate (DAP), an intermediate involved in the bacterial biosynthesis of lysine and meso-diaminopimelic acid, an essential component of bacterial cell walls. The sequence is that of Succinyl-diaminopimelate desuccinylase from Methylobacterium radiotolerans (strain ATCC 27329 / DSM 1819 / JCM 2831 / NBRC 15690 / NCIMB 10815 / 0-1).